The sequence spans 369 residues: GDSL esterase/lipase At5g42170 (369 aa).

A signal peptide spans M1–G16. Residues N28 and N45 are each glycosylated (N-linked (GlcNAc...) asparagine). The active-site Nucleophile is S57. N203 and N336 each carry an N-linked (GlcNAc...) asparagine glycan. Active-site residues include D344 and H347.

It belongs to the 'GDSL' lipolytic enzyme family.

It localises to the secreted. The sequence is that of GDSL esterase/lipase At5g42170 from Arabidopsis thaliana (Mouse-ear cress).